A 427-amino-acid polypeptide reads, in one-letter code: Glutamate-1-semialdehyde 2,1-aminomutase (427 aa).

Lys265 is modified (N6-(pyridoxal phosphate)lysine).

This sequence belongs to the class-III pyridoxal-phosphate-dependent aminotransferase family. HemL subfamily. In terms of assembly, homodimer. Requires pyridoxal 5'-phosphate as cofactor.

It localises to the cytoplasm. It catalyses the reaction (S)-4-amino-5-oxopentanoate = 5-aminolevulinate. The protein operates within porphyrin-containing compound metabolism; protoporphyrin-IX biosynthesis; 5-aminolevulinate from L-glutamyl-tRNA(Glu): step 2/2. This Burkholderia ambifaria (strain ATCC BAA-244 / DSM 16087 / CCUG 44356 / LMG 19182 / AMMD) (Burkholderia cepacia (strain AMMD)) protein is Glutamate-1-semialdehyde 2,1-aminomutase.